The chain runs to 112 residues: Nucleoid-associated protein FTM_1023 (112 aa).

It belongs to the YbaB/EbfC family. As to quaternary structure, homodimer.

The protein resides in the cytoplasm. It is found in the nucleoid. Functionally, binds to DNA and alters its conformation. May be involved in regulation of gene expression, nucleoid organization and DNA protection. This Francisella tularensis subsp. mediasiatica (strain FSC147) protein is Nucleoid-associated protein FTM_1023.